A 768-amino-acid polypeptide reads, in one-letter code: Phosphoribosylformylglycinamidine synthase subunit PurL (768 aa).

H53 is a catalytic residue. Residue Y56 coordinates ATP. E98 contributes to the Mg(2+) binding site. Substrate-binding positions include 99-102 (SHNH) and R121. H100 serves as the catalytic Proton acceptor. Mg(2+) is bound at residue D122. Q253 provides a ligand contact to substrate. Residue D285 participates in Mg(2+) binding. 328 to 330 (ETQ) provides a ligand contact to substrate. D516 and G561 together coordinate ATP. Mg(2+) is bound at residue N562. S564 is a substrate binding site.

Belongs to the FGAMS family. As to quaternary structure, monomer. Part of the FGAM synthase complex composed of 1 PurL, 1 PurQ and 2 PurS subunits.

The protein localises to the cytoplasm. It catalyses the reaction N(2)-formyl-N(1)-(5-phospho-beta-D-ribosyl)glycinamide + L-glutamine + ATP + H2O = 2-formamido-N(1)-(5-O-phospho-beta-D-ribosyl)acetamidine + L-glutamate + ADP + phosphate + H(+). Its pathway is purine metabolism; IMP biosynthesis via de novo pathway; 5-amino-1-(5-phospho-D-ribosyl)imidazole from N(2)-formyl-N(1)-(5-phospho-D-ribosyl)glycinamide: step 1/2. Its function is as follows. Part of the phosphoribosylformylglycinamidine synthase complex involved in the purines biosynthetic pathway. Catalyzes the ATP-dependent conversion of formylglycinamide ribonucleotide (FGAR) and glutamine to yield formylglycinamidine ribonucleotide (FGAM) and glutamate. The FGAM synthase complex is composed of three subunits. PurQ produces an ammonia molecule by converting glutamine to glutamate. PurL transfers the ammonia molecule to FGAR to form FGAM in an ATP-dependent manner. PurS interacts with PurQ and PurL and is thought to assist in the transfer of the ammonia molecule from PurQ to PurL. The polypeptide is Phosphoribosylformylglycinamidine synthase subunit PurL (Methanothrix thermoacetophila (strain DSM 6194 / JCM 14653 / NBRC 101360 / PT) (Methanosaeta thermophila)).